Reading from the N-terminus, the 228-residue chain is Putative NAC domain-containing protein 61 (228 aa).

An NAC domain is found at 5 to 156 (LSVGFRFYPT…KSGSSRAFDR (152 aa)). Disordered regions lie at residues 77 to 96 (ARGG…ATGS) and 166 to 197 (RNLP…QVDL). The span at 80 to 89 (GRPSRTTGSG) shows a compositional bias: low complexity. Over residues 168–193 (LPSNGVETSSRATISTSPETSHSGGN) the composition is skewed to polar residues.

It localises to the nucleus. This chain is Putative NAC domain-containing protein 61 (NAC061), found in Arabidopsis thaliana (Mouse-ear cress).